The following is a 232-amino-acid chain: Putative N-acetylmannosamine-6-phosphate 2-epimerase (232 aa).

The protein belongs to the NanE family.

It carries out the reaction an N-acyl-D-glucosamine 6-phosphate = an N-acyl-D-mannosamine 6-phosphate. Its pathway is amino-sugar metabolism; N-acetylneuraminate degradation; D-fructose 6-phosphate from N-acetylneuraminate: step 3/5. Functionally, converts N-acetylmannosamine-6-phosphate (ManNAc-6-P) to N-acetylglucosamine-6-phosphate (GlcNAc-6-P). This Borreliella burgdorferi (strain ZS7) (Borrelia burgdorferi) protein is Putative N-acetylmannosamine-6-phosphate 2-epimerase.